Consider the following 818-residue polypeptide: SIT4-associating protein SAP4 (818 aa).

Disordered stretches follow at residues 33-60 (ETSS…RDRS) and 499-526 (TSNT…KNIK). The span at 509–518 (NNDSNDSNDN) shows a compositional bias: low complexity.

This sequence belongs to the SAPS family. In terms of processing, hyperphosphorylated in the absence of SIT4.

Its function is as follows. Associates with the SIT4 phosphatase in a cell cycle dependent manner. May be directly or indirectly involved in SIT4-dependent functions in budding and in normal G1 cyclin expression. In Saccharomyces cerevisiae (strain ATCC 204508 / S288c) (Baker's yeast), this protein is SIT4-associating protein SAP4 (SAP4).